A 334-amino-acid polypeptide reads, in one-letter code: Formylmethanofuran--tetrahydromethanopterin formyltransferase (334 aa).

It belongs to the FTR family. As to quaternary structure, homotetramer.

It localises to the cytoplasm. It catalyses the reaction N-formylmethanofuran + 5,6,7,8-tetrahydromethanopterin + H(+) = N(5)-formyl-5,6,7,8-tetrahydromethanopterin + methanofuran. The protein operates within one-carbon metabolism; formaldehyde degradation; formate from formaldehyde (H(4)MPT route): step 4/5. Its function is as follows. Catalyzes the transfer of a formyl group from 5-formyl tetrahydromethanopterin (5-formyl-H(4)MPT) to methanofuran (MFR) to produce formylmethanofuran (formyl-MFR) and tetrahydromethanopterin (H(4)MPT). The chain is Formylmethanofuran--tetrahydromethanopterin formyltransferase from Rhodopirellula baltica (strain DSM 10527 / NCIMB 13988 / SH1).